The following is a 464-amino-acid chain: Cytoplasmic tRNA 2-thiolation protein 2 (464 aa).

This sequence belongs to the CTU2/NCS2 family.

The protein resides in the cytoplasm. The protein operates within tRNA modification; 5-methoxycarbonylmethyl-2-thiouridine-tRNA biosynthesis. Plays a central role in 2-thiolation of mcm(5)S(2)U at tRNA wobble positions of tRNA(Lys), tRNA(Glu) and tRNA(Gln). May act by forming a heterodimer with NCS6/CTU1 that ligates sulfur from thiocarboxylated URM1 onto the uridine of tRNAs at wobble position. This chain is Cytoplasmic tRNA 2-thiolation protein 2, found in Oryza sativa subsp. japonica (Rice).